A 260-amino-acid polypeptide reads, in one-letter code: Nuclear receptor subfamily 0 group B member 2 (260 aa).

The region spanning Ser16–Arg260 is the NR LBD domain. Arg57 carries the symmetric dimethylarginine; by PRMT5 modification.

The protein belongs to the nuclear hormone receptor family. NR0 subfamily. As to quaternary structure, heterodimer; efficient DNA binding requires dimerization with another bHLH protein. Interacts (via N-terminus) with NEUROD1 (via N-terminus and C-terminus). Interacts with ID2. Interacts with NR1I3 and EID1. Interacts with RARA, RXRA, THRB, NR5A1, NR5A2, PPARA and PPARG. Interacts with RORG, NFIL3, NR1D1 and BHLHE41. Interacts with HNF4A; the resulting heterodimer is transcriptionally inactive. Interacts with DDX3X; this interaction disrupts the interaction between HNF4 and NR0B2/SHP that forms inactive heterodimers and enhances the formation of active HNF4 homodimers. Arginine methylation by PRMT5 enhances repression activity of metabolic genes in liver in response to bile acid signaling, by increasing interaction with cofactors. Detected in kidney, testis, heart and liver.

Its subcellular location is the cytoplasm. It is found in the nucleus. Transcriptional regulator that acts as a negative regulator of receptor-dependent signaling pathways. Specifically inhibits transactivation of the nuclear receptor with which it interacts. Inhibits transcriptional activity of NEUROD1 on E-box-containing promoter by interfering with the coactivation function of the p300/CBP-mediated transcription complex for NEUROD1. Essential component of the liver circadian clock which via its interaction with NR1D1 and RORG regulates NPAS2-mediated hepatic lipid metabolism. Regulates the circadian expression of cytochrome P450 (CYP) enzymes. Represses: NR5A2 and HNF4A to down-regulate CYP2C38, NFLI3 to up-regulate CYP2A5, BHLHE41/HNF1A axis to up-regulate CYP1A2, CYP2E1 and CYP3A11, and NR1D1 to up-regulate CYP2B10, CYP4A10 and CYP4A14. This Rattus norvegicus (Rat) protein is Nuclear receptor subfamily 0 group B member 2 (Nr0b2).